The following is a 625-amino-acid chain: tRNA uridine 5-carboxymethylaminomethyl modification enzyme MnmG (625 aa).

14–19 (GAGHAG) serves as a coordination point for FAD. Position 273 to 287 (273 to 287 (GPRYCPSIEDKIVRF)) interacts with NAD(+).

The protein belongs to the MnmG family. Homodimer. Heterotetramer of two MnmE and two MnmG subunits. FAD serves as cofactor.

The protein localises to the cytoplasm. Functionally, NAD-binding protein involved in the addition of a carboxymethylaminomethyl (cmnm) group at the wobble position (U34) of certain tRNAs, forming tRNA-cmnm(5)s(2)U34. The protein is tRNA uridine 5-carboxymethylaminomethyl modification enzyme MnmG of Clostridium botulinum (strain Loch Maree / Type A3).